The following is a 164-amino-acid chain: D-aminoacyl-tRNA deacylase (164 aa).

Trp-72 and Phe-89 together coordinate tRNA. Catalysis depends on Thr-90, which acts as the Nucleophile. Residues 104–107 (HLAK) carry the C-terminal adenosine nucleotide of tRNA motif. The Gly-cisPro motif, allows the protein to recognize chirality of D-amino acids signature appears at 149 to 150 (GP).

The protein belongs to the DTD family. Homodimer.

It localises to the cytoplasm. It carries out the reaction glycyl-tRNA(Ala) + H2O = tRNA(Ala) + glycine + H(+). The catalysed reaction is a D-aminoacyl-tRNA + H2O = a tRNA + a D-alpha-amino acid + H(+). The enzyme catalyses D-tyrosyl-tRNA(Tyr) + H2O = D-tyrosine + tRNA(Tyr). Its function is as follows. D-aminoacyl-tRNA deacylase, with no observable activity on tRNAs charged with their cognate L-amino acid. Probably acts by rejecting L-amino acids from its binding site rather than specific recognition of D-amino acids. Catalyzes the hydrolysis of D-tyrosyl-tRNA(Tyr), has no activity on correctly charged L-tyrosyl-tRNA(Tyr). Hydrolyzes correctly charged, achiral, glycyl-tRNA(Gly). Deacylates mischarged D.melanogaster and E.coli glycyl-tRNA(Ala). Probably acts via tRNA-based rather than protein-based catalysis. Acts on tRNAs only when the D-amino acid is either attached to the ribose 3'-OH or transferred to the 3'-OH from the 2'-OH through rapid transesterification. Binds a number of other D-amino acids (D-Arg, D-Glu, D-His, D-Lys, D-Ser), suggesting it may also deacylate other mischarged tRNAs. The sequence is that of D-aminoacyl-tRNA deacylase from Plasmodium falciparum (isolate 3D7).